The following is a 217-amino-acid chain: Zinc finger CCHC-type and RNA-binding motif-containing protein 1 (217 aa).

One can recognise an RRM domain in the interval 10-88 (STVYVSNLPF…RVIKASIAID (79 aa)). A CCHC-type zinc finger spans residues 105–122 (SKCYECGESGHLSYACPK). The tract at residues 120–217 (CPKNMLGERE…YFSDEEELSD (98 aa)) is disordered. Over residues 145-163 (PEEEIEEVEVSEEEGEDPA) the composition is skewed to acidic residues. S155, S210, and S216 each carry phosphoserine.

In terms of assembly, component of the U11/U12 snRNPs that are part of the U12-type spliceosome. Interacts with ZRSR1. As to expression, expressed at higher level in heart and testis, and at lower level in cerebellum. Weakly expressed at low level in liver.

It localises to the nucleus. Its subcellular location is the nucleoplasm. The chain is Zinc finger CCHC-type and RNA-binding motif-containing protein 1 (Zcrb1) from Mus musculus (Mouse).